We begin with the raw amino-acid sequence, 248 residues long: 3-deoxy-manno-octulosonate cytidylyltransferase 2 (248 aa).

This sequence belongs to the KdsB family.

The protein resides in the cytoplasm. The enzyme catalyses 3-deoxy-alpha-D-manno-oct-2-ulosonate + CTP = CMP-3-deoxy-beta-D-manno-octulosonate + diphosphate. Its pathway is nucleotide-sugar biosynthesis; CMP-3-deoxy-D-manno-octulosonate biosynthesis; CMP-3-deoxy-D-manno-octulosonate from 3-deoxy-D-manno-octulosonate and CTP: step 1/1. It participates in bacterial outer membrane biogenesis; lipopolysaccharide biosynthesis. Its function is as follows. Activates KDO (a required 8-carbon sugar) for incorporation into bacterial lipopolysaccharide in Gram-negative bacteria. This Hydrogenovibrio crunogenus (strain DSM 25203 / XCL-2) (Thiomicrospira crunogena) protein is 3-deoxy-manno-octulosonate cytidylyltransferase 2.